We begin with the raw amino-acid sequence, 315 residues long: Acetyl-coenzyme A carboxylase carboxyl transferase subunit alpha (315 aa).

The CoA carboxyltransferase C-terminal domain maps to 36 to 289 (LSKKRLELME…RKAVAAELKI (254 aa)).

Belongs to the AccA family. As to quaternary structure, acetyl-CoA carboxylase is a heterohexamer composed of biotin carboxyl carrier protein (AccB), biotin carboxylase (AccC) and two subunits each of ACCase subunit alpha (AccA) and ACCase subunit beta (AccD).

Its subcellular location is the cytoplasm. It catalyses the reaction N(6)-carboxybiotinyl-L-lysyl-[protein] + acetyl-CoA = N(6)-biotinyl-L-lysyl-[protein] + malonyl-CoA. Its pathway is lipid metabolism; malonyl-CoA biosynthesis; malonyl-CoA from acetyl-CoA: step 1/1. Component of the acetyl coenzyme A carboxylase (ACC) complex. First, biotin carboxylase catalyzes the carboxylation of biotin on its carrier protein (BCCP) and then the CO(2) group is transferred by the carboxyltransferase to acetyl-CoA to form malonyl-CoA. This is Acetyl-coenzyme A carboxylase carboxyl transferase subunit alpha from Francisella tularensis subsp. tularensis (strain FSC 198).